Consider the following 258-residue polypeptide: MSSQPFTNKVIALTGSASGIGLETAKLLASRGARLSLADIQEDKLKELQAQLESEYYVDVITTKVDVRKFGEVEAWINKTIDNFGKLDGSANLAGVAPESIGLKGIVEQDLDEWEFVLGVNLTGTMNSLKAQLKVMANNGSIVNASSIRGLTGAAKNASYSSAKHGIIGLTRTAAKEVGGKGIRVNAICPGRISTPMLKTAENSIGLHLQPGSANYPPIALGRDGEAKEVAQLVAFLLSDESTYISGADISIDGGWRC.

NADP(+) contacts are provided by I20, D66, and K130. Active-site proton donor residues include S146 and Y160. Y160, K164, I193, and T195 together coordinate NADP(+). The active-site Lowers pKa of active site Tyr is K164.

The protein belongs to the short-chain dehydrogenases/reductases (SDR) family.

It functions in the pathway hormone biosynthesis. Functionally, short-chain dehydrogenase/reductase; part of the gene cluster that mediates the biosynthesis of abscisic acid (ABA), a phytohormone that acts antagonistically toward salicylic acid (SA), jasmonic acid (JA) and ethylene (ETH) signaling, to impede plant defense responses. The first step of the pathway catalyzes the reaction from farnesyl diphosphate to alpha-ionylideneethane performed by the alpha-ionylideneethane synthase aba3 via a three-step reaction mechanism involving 2 neutral intermediates, beta-farnesene and allofarnesene. The cytochrome P450 monooxygenase aba1 might then be involved in the conversion of alpha-ionylideneethane to alpha-ionylideneacetic acid. Alpha-ionylideneacetic acid is further converted to abscisic acid in 2 steps involving the cytochrome P450 monooxygenase aba2 and the short-chain dehydrogenase/reductase aba4, via the intermediates 1'-deoxy-ABA or 1',4'-trans-diol-ABA, depending on the order of action of these 2 enzymes. Aba2 is responsible for the hydroxylation of carbon atom C-1' and aba4 might be involved in the oxidation of the C-4' carbon atom. The chain is Short-chain dehydrogenase/reductase aba4 from Botryotinia fuckeliana (strain B05.10) (Noble rot fungus).